The primary structure comprises 387 residues: Exodeoxyribonuclease 7 large subunit (387 aa).

Belongs to the XseA family. In terms of assembly, heterooligomer composed of large and small subunits.

The protein localises to the cytoplasm. The enzyme catalyses Exonucleolytic cleavage in either 5'- to 3'- or 3'- to 5'-direction to yield nucleoside 5'-phosphates.. Bidirectionally degrades single-stranded DNA into large acid-insoluble oligonucleotides, which are then degraded further into small acid-soluble oligonucleotides. The protein is Exodeoxyribonuclease 7 large subunit of Campylobacter jejuni subsp. jejuni serotype O:2 (strain ATCC 700819 / NCTC 11168).